We begin with the raw amino-acid sequence, 199 residues long: NAD(P)H dehydrogenase (quinone) (199 aa).

One can recognise a Flavodoxin-like domain in the interval 4–190; it reads VLVLYYSAYG…AGARYQGKTI (187 aa). Residues 10–15 and 78–80 each bind FMN; these read SAYGHI and TRF. Tyr-12 contacts NAD(+). A substrate-binding site is contributed by Trp-98. FMN contacts are provided by residues 113 to 119 and His-134; that span reads STATQHG.

This sequence belongs to the WrbA family. It depends on FMN as a cofactor.

It carries out the reaction a quinone + NADH + H(+) = a quinol + NAD(+). The catalysed reaction is a quinone + NADPH + H(+) = a quinol + NADP(+). In Rhodopseudomonas palustris (strain TIE-1), this protein is NAD(P)H dehydrogenase (quinone).